Consider the following 708-residue polypeptide: Capsid scaffolding protein (708 aa).

Active-site charge relay system residues include histidine 63, serine 132, and histidine 157. 3 disordered regions span residues 269–339 (ASAE…MSHP), 455–565 (HPSY…QQQR), and 593–619 (ALPS…SGGG). Residues 284–293 (PAAGARVPSS) are compositionally biased toward low complexity. Over residues 294-311 (SPSPPVEPPSPVQPPALP) the composition is skewed to pro residues. Over residues 326 to 339 (SPSEPAEAASMSHP) the composition is skewed to low complexity. Residues 333 to 352 (AASMSHPLSAAVPAATAPPG) form an interaction with pAP region. Over residues 498 to 513 (KQHRHGGSGGHNKRRK) the composition is skewed to basic residues. 2 short sequence motifs (nuclear localization signal) span residues 510–515 (KRRKET) and 537–543 (RARKRLK). Positions 593–611 (ALPSAASSSPTTTTVCTPT) are enriched in low complexity. Residues 688–708 (PPKDMVDLNRRIFVAALNKLE) are interaction with major capsid protein.

It belongs to the herpesviridae capsid scaffolding protein family. Homomultimer. Interacts with major capsid protein. In terms of assembly, exists in a monomer-dimer equilibrium with the dimer being the active species. Post-translationally, capsid scaffolding protein is cleaved by assemblin after formation of the spherical procapsid. As a result, the capsid obtains its mature, icosahedral shape. Cleavages occur at two or more sites: release (R-site) and maturation (M-site).

It is found in the host cytoplasm. Its subcellular location is the host nucleus. It carries out the reaction Cleaves -Ala-|-Ser- and -Ala-|-Ala- bonds in the scaffold protein.. Functionally, acts as a scaffold protein by binding major capsid protein in the cytoplasm, inducing the nuclear localization of both proteins. Multimerizes in the nucleus such as major capsid protein forms the icosahedral T=16 capsid. Autocatalytic cleavage releases the assembly protein, and subsequently abolishes interaction with major capsid protein. Cleavages products are evicted from the capsid before or during DNA packaging. Protease that plays an essential role in virion assembly within the nucleus. Catalyzes the cleavage of the assembly protein after formation of the spherical procapsid. By that cleavage, the capsid matures and gains its icosahedral shape. The cleavage sites seem to include -Ala-Ser-, -Ala-Ala-, as well as Ala-Thr bonds. Assemblin and cleavages products are evicted from the capsid before or during DNA packaging. Its function is as follows. Plays a major role in capsid assembly. Acts as a scaffold protein by binding major capsid protein. Multimerizes in the nucleus such as major capsid protein forms the icosahedral T=16 capsid. Cleaved by assemblin after capsid completion. The cleavages products are evicted from the capsid before or during DNA packaging. This chain is Capsid scaffolding protein (UL80), found in Homo sapiens (Human).